Reading from the N-terminus, the 127-residue chain is uncharacterized protein (127 aa).

The N-terminal stretch at 1–26 is a signal peptide; the sequence is MKAIYALLAVVALALVAVSLFSQSDS.

This is an uncharacterized protein from Archaeoglobus fulgidus (strain ATCC 49558 / DSM 4304 / JCM 9628 / NBRC 100126 / VC-16).